Consider the following 120-residue polypeptide: Myohemerythrin (120 aa).

Fe cation contacts are provided by H26, H56, E60, H75, H79, H108, and D113.

This sequence belongs to the hemerythrin family.

Its function is as follows. Myohemerythrin is an oxygen-binding protein found in the retractor muscles of certain worms. The oxygen-binding site contains two iron atoms. This chain is Myohemerythrin, found in Sipunculus nudus (Sipunculan worm).